The primary structure comprises 452 residues: Growth/differentiation factor 6 (452 aa).

A signal peptide spans 1 to 22; sequence MDTPRVLLWAIFLISFLWDLPG. A propeptide spanning residues 23 to 332 is cleaved from the precursor; that stretch reads FQQASISSSS…LPSPGRRRRR (310 aa). Residues 29–93 form a disordered region; sequence SSSSSTELDS…QEPPGRGPRV (65 aa). 2 stretches are compositionally biased toward basic and acidic residues: residues 37–46 and 58–75; these read DSTKDVENRK and AEGR…ELRR. Asparagine 115 is a glycosylation site (N-linked (GlcNAc...) asparagine). Disordered stretches follow at residues 244–267 and 301–348; these read RDSG…LGFG and AEAA…KKSR. Over residues 301-317 the composition is skewed to low complexity; it reads AEAAGAEGSWPAPSGAP. Over residues 327–348 the composition is skewed to basic residues; that stretch reads GRRRRRTALSSRHGKRHGKKSR. Intrachain disulfides connect cysteine 351–cysteine 417, cysteine 380–cysteine 449, and cysteine 384–cysteine 451.

Belongs to the TGF-beta family. In terms of assembly, homodimer; disulfide-linked.

The protein localises to the secreted. Growth factor that controls proliferation and cellular differentiation in the retina and bone formation. Plays a key role in regulating apoptosis during retinal development. Establishes dorsal-ventral positional information in the retina and controls the formation of the retinotectal map. Required for normal formation of bones and joints in the limbs, skull, digits and axial skeleton. Plays a key role in establishing boundaries between skeletal elements during development. Regulation of GDF6 expression seems to be a mechanism for evolving species-specific changes in skeletal structures. Seems to positively regulate differentiation of chondrogenic tissue through the growth factor receptors subunits BMPR1A, BMPR1B, BMPR2 and ACVR2A, leading to the activation of SMAD1-SMAD5-SMAD8 complex. The regulation of chondrogenic differentiation is inhibited by NOG. Also involved in the induction of adipogenesis from mesenchymal stem cells. This mechanism acts through the growth factor receptors subunits BMPR1A, BMPR2 and ACVR2A and the activation of SMAD1-SMAD5-SMAD8 complex and MAPK14/p38. This chain is Growth/differentiation factor 6 (Gdf6), found in Rattus norvegicus (Rat).